The chain runs to 547 residues: CDK5RAP1-like protein (547 aa).

Residues arginine 79–glycine 194 enclose the MTTase N-terminal domain. 6 residues coordinate [4Fe-4S] cluster: cysteine 88, cysteine 124, cysteine 157, cysteine 232, cysteine 236, and cysteine 239. A Radical SAM core domain is found at aspartate 218–lysine 475. Residues glutamine 478–glycine 543 enclose the TRAM domain.

Belongs to the methylthiotransferase family. MiaB subfamily. The cofactor is [4Fe-4S] cluster.

Functionally, potential regulator of CDK5 activity. The sequence is that of CDK5RAP1-like protein from Caenorhabditis elegans.